A 346-amino-acid chain; its full sequence is Probable disease resistance protein At5g45440 (346 aa).

An NB-ARC domain is found at 38–116 (KQVEDRVETD…AYAPRIWVSM (79 aa)). 85–92 (GEYGVGKT) is an ATP binding site. The segment at 315–346 (FDDGKANQNGSKDGKTDSVDNPNSEESKTKPL) is disordered.

Functionally, possible disease resistance protein. The chain is Probable disease resistance protein At5g45440 from Arabidopsis thaliana (Mouse-ear cress).